A 99-amino-acid chain; its full sequence is DNA-directed RNA polymerase subunit Rpo11 (99 aa).

Belongs to the archaeal Rpo11/eukaryotic RPB11/RPC19 RNA polymerase subunit family. Part of the RNA polymerase complex.

The protein resides in the cytoplasm. It catalyses the reaction RNA(n) + a ribonucleoside 5'-triphosphate = RNA(n+1) + diphosphate. Its function is as follows. DNA-dependent RNA polymerase (RNAP) catalyzes the transcription of DNA into RNA using the four ribonucleoside triphosphates as substrates. The sequence is that of DNA-directed RNA polymerase subunit Rpo11 from Aeropyrum pernix (strain ATCC 700893 / DSM 11879 / JCM 9820 / NBRC 100138 / K1).